Consider the following 451-residue polypeptide: SVGFKAGVKDYRLTYYTPDYETKDTDILAAFRVTPQPGVPAEEAGAAVAAESSTGTWTTVWTDGLTSLDRYKGRCYHIEAVVGEENQYIAYVAYPLDLFEEGSVTNMFTSIVGNVFGFKALRALRLEDLRIPPSYSKTFQGPPHGIQVERDKLNKYGRPLLGCTIKPKLGLSAKNYGRAVYECLRGGLDFTKDDENVNSQPFMRWRDRFLFCAEAIYKAQAETGEIKGHYLNATAGTCEEMIKRAVFARELGVPIVMHDYLTGGFTANTSLAHYCRDNGLLLHIHRAMHAVIDRQKNHGMHFRVLAKALRMSGGDHIHAGTVVGKLEGEREMTLGFVDLLRDDYIEKDRSRGIFFTQDWVSMPGVLPVASGGIHVWHMPALTEIFGDDSVLQFGGGTLGHPWGNAPGAVANRVALEACVQARNEGRDLAREGNEIIPEACNWSPELAAACE.

Lys-5 is subject to N6,N6,N6-trimethyllysine. Residues Asn-114 and Thr-164 each coordinate substrate. Lys-166 acts as the Proton acceptor in catalysis. Lys-168 provides a ligand contact to substrate. Positions 192, 194, and 195 each coordinate Mg(2+). Position 192 is an N6-carboxylysine (Lys-192). His-285 functions as the Proton acceptor in the catalytic mechanism. 3 residues coordinate substrate: Arg-286, His-318, and Ser-370.

Belongs to the RuBisCO large chain family. Type I subfamily. As to quaternary structure, heterohexadecamer of 8 large chains and 8 small chains; disulfide-linked. The disulfide link is formed within the large subunit homodimers. The cofactor is Mg(2+). In terms of processing, the disulfide bond which can form in the large chain dimeric partners within the hexadecamer appears to be associated with oxidative stress and protein turnover.

It is found in the plastid. The protein localises to the chloroplast. The catalysed reaction is 2 (2R)-3-phosphoglycerate + 2 H(+) = D-ribulose 1,5-bisphosphate + CO2 + H2O. It catalyses the reaction D-ribulose 1,5-bisphosphate + O2 = 2-phosphoglycolate + (2R)-3-phosphoglycerate + 2 H(+). RuBisCO catalyzes two reactions: the carboxylation of D-ribulose 1,5-bisphosphate, the primary event in carbon dioxide fixation, as well as the oxidative fragmentation of the pentose substrate in the photorespiration process. Both reactions occur simultaneously and in competition at the same active site. This is Ribulose bisphosphate carboxylase large chain from Aristea glauca.